The chain runs to 187 residues: MINAGELRKNTKLMIEGEPYVMLEVQFVKPGKGVAFYKCKMRNLMTGSLLERTYRSGDTFEPAALEEKKMQYLYAQGDEYYFMDVKTYDQVMLTEEAVGDAKEYLIDNLEMDILFFENKAIGITLPNFVELEVTQADPWVKGDSVAGDSKPVTLQTGMVLQVPPFVEEGTIIQVDTRTGAYVTRVKK.

This sequence belongs to the elongation factor P family.

The protein localises to the cytoplasm. Its pathway is protein biosynthesis; polypeptide chain elongation. Its function is as follows. Involved in peptide bond synthesis. Stimulates efficient translation and peptide-bond synthesis on native or reconstituted 70S ribosomes in vitro. Probably functions indirectly by altering the affinity of the ribosome for aminoacyl-tRNA, thus increasing their reactivity as acceptors for peptidyl transferase. The sequence is that of Elongation factor P from Desulfatibacillum aliphaticivorans.